A 345-amino-acid polypeptide reads, in one-letter code: Phosphoribosylformylglycinamidine cyclo-ligase (345 aa).

This sequence belongs to the AIR synthase family.

It is found in the cytoplasm. It carries out the reaction 2-formamido-N(1)-(5-O-phospho-beta-D-ribosyl)acetamidine + ATP = 5-amino-1-(5-phospho-beta-D-ribosyl)imidazole + ADP + phosphate + H(+). The protein operates within purine metabolism; IMP biosynthesis via de novo pathway; 5-amino-1-(5-phospho-D-ribosyl)imidazole from N(2)-formyl-N(1)-(5-phospho-D-ribosyl)glycinamide: step 2/2. In Myxococcus xanthus (strain DK1622), this protein is Phosphoribosylformylglycinamidine cyclo-ligase.